The primary structure comprises 354 residues: Uroporphyrinogen decarboxylase (354 aa).

Substrate is bound by residues 27-31 (RQAGR), Asp77, Tyr154, Thr209, and His327.

This sequence belongs to the uroporphyrinogen decarboxylase family. In terms of assembly, homodimer.

The protein localises to the cytoplasm. The enzyme catalyses uroporphyrinogen III + 4 H(+) = coproporphyrinogen III + 4 CO2. It participates in porphyrin-containing compound metabolism; protoporphyrin-IX biosynthesis; coproporphyrinogen-III from 5-aminolevulinate: step 4/4. Catalyzes the decarboxylation of four acetate groups of uroporphyrinogen-III to yield coproporphyrinogen-III. This Edwardsiella ictaluri (strain 93-146) protein is Uroporphyrinogen decarboxylase.